The sequence spans 108 residues: ATP synthase epsilon chain (108 aa).

This sequence belongs to the ATPase epsilon chain family. As to quaternary structure, F-type ATPases have 2 components, CF(1) - the catalytic core - and CF(0) - the membrane proton channel. CF(1) has five subunits: alpha(3), beta(3), gamma(1), delta(1), epsilon(1). CF(0) has three main subunits: a, b and c.

It localises to the cell inner membrane. Produces ATP from ADP in the presence of a proton gradient across the membrane. The protein is ATP synthase epsilon chain of Thermotoga maritima (strain ATCC 43589 / DSM 3109 / JCM 10099 / NBRC 100826 / MSB8).